The primary structure comprises 272 residues: Putative pyruvate, phosphate dikinase regulatory protein 2 (272 aa).

Residue 154–161 coordinates ADP; sequence GVSRTSKT.

Belongs to the pyruvate, phosphate/water dikinase regulatory protein family. PDRP subfamily.

The enzyme catalyses N(tele)-phospho-L-histidyl/L-threonyl-[pyruvate, phosphate dikinase] + ADP = N(tele)-phospho-L-histidyl/O-phospho-L-threonyl-[pyruvate, phosphate dikinase] + AMP + H(+). It catalyses the reaction N(tele)-phospho-L-histidyl/O-phospho-L-threonyl-[pyruvate, phosphate dikinase] + phosphate + H(+) = N(tele)-phospho-L-histidyl/L-threonyl-[pyruvate, phosphate dikinase] + diphosphate. In terms of biological role, bifunctional serine/threonine kinase and phosphorylase involved in the regulation of the pyruvate, phosphate dikinase (PPDK) by catalyzing its phosphorylation/dephosphorylation. This chain is Putative pyruvate, phosphate dikinase regulatory protein 2, found in Staphylococcus epidermidis (strain ATCC 35984 / DSM 28319 / BCRC 17069 / CCUG 31568 / BM 3577 / RP62A).